Reading from the N-terminus, the 661-residue chain is Transketolase (661 aa).

Residue histidine 30 participates in substrate binding. Thiamine diphosphate is bound by residues histidine 70 and 118–120 (GPL). Residues 99–118 (STTPGHPEFRDTPGVEATTG) form a disordered region. Aspartate 159 serves as a coordination point for Mg(2+). Thiamine diphosphate contacts are provided by glycine 160 and asparagine 189. Mg(2+) is bound by residues asparagine 189 and valine 191. Residues histidine 266, arginine 357, and serine 384 each coordinate substrate. Residue histidine 266 coordinates thiamine diphosphate. Glutamate 411 functions as the Proton donor in the catalytic mechanism. A thiamine diphosphate-binding site is contributed by phenylalanine 437. Residues histidine 461, aspartate 469, and arginine 520 each contribute to the substrate site.

Belongs to the transketolase family. As to quaternary structure, homodimer. Mg(2+) is required as a cofactor. It depends on Ca(2+) as a cofactor. Mn(2+) serves as cofactor. The cofactor is Co(2+). Requires thiamine diphosphate as cofactor.

The enzyme catalyses D-sedoheptulose 7-phosphate + D-glyceraldehyde 3-phosphate = aldehydo-D-ribose 5-phosphate + D-xylulose 5-phosphate. Functionally, catalyzes the transfer of a two-carbon ketol group from a ketose donor to an aldose acceptor, via a covalent intermediate with the cofactor thiamine pyrophosphate. This Physarum polycephalum (Slime mold) protein is Transketolase (tkt).